The following is a 320-amino-acid chain: Malate dehydrogenase (320 aa).

NAD(+) is bound by residues 10–15 (GSGMIG) and Asp-34. Residues Arg-83 and Arg-89 each contribute to the substrate site. NAD(+)-binding positions include Asn-96 and 119–121 (ITN). Residues Asn-121 and Arg-152 each contribute to the substrate site. His-176 acts as the Proton acceptor in catalysis.

The protein belongs to the LDH/MDH superfamily. MDH type 3 family.

It carries out the reaction (S)-malate + NAD(+) = oxaloacetate + NADH + H(+). Catalyzes the reversible oxidation of malate to oxaloacetate. The polypeptide is Malate dehydrogenase (Brucella anthropi (strain ATCC 49188 / DSM 6882 / CCUG 24695 / JCM 21032 / LMG 3331 / NBRC 15819 / NCTC 12168 / Alc 37) (Ochrobactrum anthropi)).